We begin with the raw amino-acid sequence, 138 residues long: Small ribosomal subunit protein uS11c (138 aa).

The interval M1–R24 is disordered. Basic residues predominate over residues G9 to R24.

The protein belongs to the universal ribosomal protein uS11 family. In terms of assembly, part of the 30S ribosomal subunit.

The protein resides in the plastid. Its subcellular location is the chloroplast. The protein is Small ribosomal subunit protein uS11c of Liriodendron tulipifera (Tuliptree).